The following is a 355-amino-acid chain: MSAVPFSKISTPLNALFATIGLLVVAALTTQGLTGQERLVFELLLAAIWLAYVLQLSGTLLSRRRRLSGEMTALVIDLLAVLVPAAAFLFVGSRDRDLYCAIWLLKPLRDSTFFRLLAKVVANESRNLLGVTSVFGIVLFGAALAGYIIERDVQPDKFGSIPQAMWWAVVTLSTTGYGDEIPQSLAGRVLAGLVMMSGIGIFALWAGILATGFYEEVRRQDFVRNWQLVAAVPLFQKLGSAALIEIVRALRPRIVPAGAVICRKGEVGDQMFFIVEGRVTVATPDHPVELGAGNFFGEMALISGDPRSATVSAATEVSLLSLYAVDFQILSSSSPEIAETIRKTALERRGGPPKE.

Topologically, residues 1-12 are cytoplasmic; sequence MSAVPFSKISTP. Residues 13–30 form a helical membrane-spanning segment; that stretch reads LNALFATIGLLVVAALTT. Residues 31 to 38 are Periplasmic-facing; the sequence is QGLTGQER. Residues 39–61 traverse the membrane as a helical segment; it reads LVFELLLAAIWLAYVLQLSGTLL. At 62–73 the chain is on the cytoplasmic side; that stretch reads SRRRRLSGEMTA. Residues 74–93 traverse the membrane as a helical segment; sequence LVIDLLAVLVPAAAFLFVGS. A helical transmembrane segment spans residues 94 to 111; the sequence is RDRDLYCAIWLLKPLRDS. Residues 112–128 are Cytoplasmic-facing; that stretch reads TFFRLLAKVVANESRNL. Residues 129-149 form a helical membrane-spanning segment; the sequence is LGVTSVFGIVLFGAALAGYII. At 150–160 the chain is on the periplasmic side; sequence ERDVQPDKFGS. The pore-forming intramembrane region spans 161-179; it reads IPQAMWWAVVTLSTTGYGD. The short motif at 174–179 is the Selectivity filter element; that stretch reads TTGYGD. Over 180-184 the chain is Periplasmic; sequence EIPQS. Residues 185-209 traverse the membrane as a helical segment; the sequence is LAGRVLAGLVMMSGIGIFALWAGIL. Over 210 to 355 the chain is Cytoplasmic; that stretch reads ATGFYEEVRR…LERRGGPPKE (146 aa). Residues 297–298, 307–308, and Arg348 contribute to the 3',5'-cyclic AMP site; these read GE and RS.

This sequence belongs to the potassium channel family. Homotetramer.

The protein localises to the cell membrane. In terms of biological role, cyclic nucleotide-regulated potassium channel activated by cAMP. The protein is Cyclic nucleotide-gated potassium channel RHE_CH03180 of Rhizobium etli (strain ATCC 51251 / DSM 11541 / JCM 21823 / NBRC 15573 / CFN 42).